The sequence spans 641 residues: NADH-ubiquinone oxidoreductase chain 5 (641 aa).

The next 17 helical transmembrane spans lie at 1-21 (MYLT…VIGR), 33-53 (SLSI…IVLL), 59-79 (ITIY…WAFY), 83-103 (ISIT…LYSI), 121-141 (LFTF…MFVG), 175-195 (VGDL…GSSD), 211-231 (ITIV…QLGL), 243-263 (TPVS…YLIL), 276-296 (LICV…TGLF), 303-322 (VIAY…LGLS), 367-387 (ILPF…ALPF), 405-425 (FLVT…ITAF), 453-473 (PLIM…IGYI), 476-496 (KHLS…VGTL), 512-532 (FGVQ…ALIV), 564-584 (WFDN…GGIF), and 621-641 (IPHY…SIFI).

The protein belongs to the complex I subunit 5 family.

It is found in the mitochondrion inner membrane. It carries out the reaction a ubiquinone + NADH + 5 H(+)(in) = a ubiquinol + NAD(+) + 4 H(+)(out). Its function is as follows. Core subunit of the mitochondrial membrane respiratory chain NADH dehydrogenase (Complex I) that is believed to belong to the minimal assembly required for catalysis. Complex I functions in the transfer of electrons from NADH to the respiratory chain. The immediate electron acceptor for the enzyme is believed to be ubiquinone. The polypeptide is NADH-ubiquinone oxidoreductase chain 5 (ND5) (Allomyces macrogynus).